The following is a 346-amino-acid chain: MAIRWSELCIVLFALSYAICVLAGKSYYDVLQVPKGASDEQIKRAYRKLALKYHPDKNQGNEEATRKFAEINNAYEVLSDEEKREIYNKYGEEGLKQFSANGGRGGGGGGMNMQDIFSSFFGGGSMEEEEKVVKGDDVIVELEATLEDLYMGGSMKVWREKNVIKPAPGKRKCNCRNEVYHRQIGPGMFQQMTEQVCDKCPNVKYEREGYFVTVDIEKGMKDGEEVSFYEDGEPILDGDPGDLKFRIRTAPHARFRRDGNDLHMNVNITLVEALVGFEKSFKHLDDHEVDISSKGITKPKEVKKFKGEGMPLHYSTKKGNLFVTFEVLFPSSLTDDQKKKIKEVFA.

An N-terminal signal peptide occupies residues 1-23 (MAIRWSELCIVLFALSYAICVLA). The region spanning 26–91 (SYYDVLQVPK…EKREIYNKYG (66 aa)) is the J domain. The N-linked (GlcNAc...) asparagine glycan is linked to N267.

As to quaternary structure, interacts with SDF2 and MED37A/BIP1. N-glycosylated. As to expression, expressed in leaves, flower buds and flowers.

The protein resides in the endoplasmic reticulum lumen. Functionally, regulates protein folding in the endoplasmic reticulum (ER) lumen. Forms a complex in the ER with SDF2 and MED37A/BIP1 which is required for the proper accumulation and function of the surface-exposed leucine-rich repeat receptor kinases EFR involved in pathogen-associated molecular pattern (PAMP) triggered immunity. This chain is DnaJ protein ERDJ3B (ERDJ3B), found in Arabidopsis thaliana (Mouse-ear cress).